The chain runs to 249 residues: General transcription factor IIF subunit 2 (249 aa).

Position 2 is an N-acetylalanine (alanine 2). An N6-acetyllysine mark is found at lysine 22, lysine 33, and lysine 137. Serine 142 carries the phosphoserine modification. DNA is bound by residues glycine 227 and histidine 229. Serine 248 is subject to Phosphoserine.

This sequence belongs to the TFIIF beta subunit family. As to quaternary structure, heterodimer of an alpha and a beta subunit. Interacts with HTATSF1 and URI1. Interacts with GPBP1. Interacts with GTF2B (via N-terminus); this interaction is inhibited in presence of GTF2F1. Part of TBP-based Pol II pre-initiation complex (PIC), in which Pol II core assembles with general transcription factors and other specific initiation factors including GTF2E1, GTF2E2, GTF2F1, GTF2F2, TCEA1, ERCC2, ERCC3, GTF2H2, GTF2H3, GTF2H4, GTF2H5, GTF2A1, GTF2A2, GTF2B and TBP; this large multi-subunit PIC complex mediates DNA unwinding and targets Pol II core to the transcription start site where the first phosphodiester bond forms.

Its subcellular location is the nucleus. TFIIF is a general transcription initiation factor that binds to RNA polymerase II and helps to recruit it to the initiation complex in collaboration with TFIIB. In Mus musculus (Mouse), this protein is General transcription factor IIF subunit 2 (Gtf2f2).